The following is a 381-amino-acid chain: Acetylornithine deacetylase (381 aa).

His-78 is a binding site for Zn(2+). Asp-80 is an active-site residue. Residue Asp-110 participates in Zn(2+) binding. The active site involves Glu-142. Glu-143, Glu-167, and His-353 together coordinate Zn(2+).

Belongs to the peptidase M20A family. ArgE subfamily. As to quaternary structure, homodimer. It depends on Zn(2+) as a cofactor. Requires Co(2+) as cofactor. The cofactor is glutathione.

It is found in the cytoplasm. It carries out the reaction N(2)-acetyl-L-ornithine + H2O = L-ornithine + acetate. The protein operates within amino-acid biosynthesis; L-arginine biosynthesis; L-ornithine from N(2)-acetyl-L-ornithine (linear): step 1/1. Its function is as follows. Catalyzes the hydrolysis of the amide bond of N(2)-acetylated L-amino acids. Cleaves the acetyl group from N-acetyl-L-ornithine to form L-ornithine, an intermediate in L-arginine biosynthesis pathway, and a branchpoint in the synthesis of polyamines. In Moritella profunda, this protein is Acetylornithine deacetylase.